The sequence spans 451 residues: Glycosyltransferase-like At2g41451 (451 aa).

An N-terminal signal peptide occupies residues 1–23; it reads MASSDSSYSRKFLLITFLPLSLA. N-linked (GlcNAc...) asparagine glycans are attached at residues N36, N137, N168, N441, and N444. Positions 109–345 constitute a GT92 domain; it reads QTLPWIFYHK…TYSKFSDLTS (237 aa).

The protein belongs to the glycosyltransferase 92 family.

The protein resides in the secreted. Its subcellular location is the cell wall. The protein localises to the cytoplasm. It is found in the cell membrane. Involved in the coordination between cell elongation and cellulose synthesis by promoting the expression of genes involved in cell elongation and cellulose synthesis. Acts as a regulator of plasmodesmatal permeability. Maybe a glycosyltransferase. The chain is Glycosyltransferase-like At2g41451 from Arabidopsis thaliana (Mouse-ear cress).